Reading from the N-terminus, the 158-residue chain is UPF0225 protein PSEEN1229 (158 aa).

Belongs to the UPF0225 family.

The protein is UPF0225 protein PSEEN1229 of Pseudomonas entomophila (strain L48).